We begin with the raw amino-acid sequence, 354 residues long: Methylthioribose-1-phosphate isomerase (354 aa).

Residues 48–50 (RGA), Arg-95, and Gln-202 contribute to the substrate site. Asp-243 (proton donor) is an active-site residue. 253-254 (NK) provides a ligand contact to substrate.

The protein belongs to the eIF-2B alpha/beta/delta subunits family. MtnA subfamily.

It carries out the reaction 5-(methylsulfanyl)-alpha-D-ribose 1-phosphate = 5-(methylsulfanyl)-D-ribulose 1-phosphate. The protein operates within amino-acid biosynthesis; L-methionine biosynthesis via salvage pathway; L-methionine from S-methyl-5-thio-alpha-D-ribose 1-phosphate: step 1/6. Catalyzes the interconversion of methylthioribose-1-phosphate (MTR-1-P) into methylthioribulose-1-phosphate (MTRu-1-P). The sequence is that of Methylthioribose-1-phosphate isomerase from Roseiflexus castenholzii (strain DSM 13941 / HLO8).